A 160-amino-acid polypeptide reads, in one-letter code: Ribosomal RNA large subunit methyltransferase H (160 aa).

Residues Leu76, Gly108, and 127 to 132 contribute to the S-adenosyl-L-methionine site; that span reads LGKMTW.

It belongs to the RNA methyltransferase RlmH family. As to quaternary structure, homodimer.

The protein localises to the cytoplasm. The enzyme catalyses pseudouridine(1915) in 23S rRNA + S-adenosyl-L-methionine = N(3)-methylpseudouridine(1915) in 23S rRNA + S-adenosyl-L-homocysteine + H(+). Functionally, specifically methylates the pseudouridine at position 1915 (m3Psi1915) in 23S rRNA. In Rhizobium etli (strain ATCC 51251 / DSM 11541 / JCM 21823 / NBRC 15573 / CFN 42), this protein is Ribosomal RNA large subunit methyltransferase H.